A 409-amino-acid polypeptide reads, in one-letter code: Protein naked cuticle homolog 2-like (409 aa).

Gly-2 carries N-myristoyl glycine lipidation. The 36-residue stretch at 109–144 folds into the EF-hand domain; that stretch reads AEDNRQEWVFTLYDFDNSGKVTKEDMSSLMHTIYDV. 5 residues coordinate Ca(2+): Asp-122, Asp-124, Ser-126, Lys-128, and Asp-133. Disordered regions lie at residues 166–224, 243–315, 346–367, and 388–409; these read VTPE…YCVD, TSRF…RFPG, NHTH…IRSR, and RHEH…YHQT. 2 stretches are compositionally biased toward basic and acidic residues: residues 171–185 and 193–224; these read AARR…RETS and VRSE…YCVD. Positions 247 to 268 are enriched in low complexity; it reads DSSSPDADQDPPSRSSHSQSRP. Basic residues predominate over residues 389–409; the sequence is HEHHHHHEHHHHHHYHHYHQT.

It belongs to the NKD family.

It is found in the cell membrane. The protein resides in the cytoplasm. Cell autonomous antagonist of both the canonical and non-canonical Wnt signaling pathways. This chain is Protein naked cuticle homolog 2-like (nkd2l), found in Danio rerio (Zebrafish).